The chain runs to 262 residues: Acyl-[acyl-carrier-protein]--UDP-N-acetylglucosamine O-acyltransferase (262 aa).

The protein belongs to the transferase hexapeptide repeat family. LpxA subfamily. As to quaternary structure, homotrimer.

The protein resides in the cytoplasm. It carries out the reaction a (3R)-hydroxyacyl-[ACP] + UDP-N-acetyl-alpha-D-glucosamine = a UDP-3-O-[(3R)-3-hydroxyacyl]-N-acetyl-alpha-D-glucosamine + holo-[ACP]. Its pathway is glycolipid biosynthesis; lipid IV(A) biosynthesis; lipid IV(A) from (3R)-3-hydroxytetradecanoyl-[acyl-carrier-protein] and UDP-N-acetyl-alpha-D-glucosamine: step 1/6. Functionally, involved in the biosynthesis of lipid A, a phosphorylated glycolipid that anchors the lipopolysaccharide to the outer membrane of the cell. This chain is Acyl-[acyl-carrier-protein]--UDP-N-acetylglucosamine O-acyltransferase, found in Burkholderia orbicola (strain MC0-3).